A 341-amino-acid chain; its full sequence is Glycerol-3-phosphate dehydrogenase [NAD(P)+] (341 aa).

Positions 13, 14, and 108 each coordinate NADPH. Sn-glycerol 3-phosphate is bound by residues lysine 108, glycine 139, and serine 141. Alanine 143 contributes to the NADPH binding site. Residues lysine 194, aspartate 247, serine 257, arginine 258, and asparagine 259 each contribute to the sn-glycerol 3-phosphate site. Lysine 194 (proton acceptor) is an active-site residue. Arginine 258 provides a ligand contact to NADPH. Residues valine 282 and glutamate 284 each coordinate NADPH.

It belongs to the NAD-dependent glycerol-3-phosphate dehydrogenase family.

The protein resides in the cytoplasm. The enzyme catalyses sn-glycerol 3-phosphate + NAD(+) = dihydroxyacetone phosphate + NADH + H(+). It carries out the reaction sn-glycerol 3-phosphate + NADP(+) = dihydroxyacetone phosphate + NADPH + H(+). It functions in the pathway membrane lipid metabolism; glycerophospholipid metabolism. Functionally, catalyzes the reduction of the glycolytic intermediate dihydroxyacetone phosphate (DHAP) to sn-glycerol 3-phosphate (G3P), the key precursor for phospholipid synthesis. The sequence is that of Glycerol-3-phosphate dehydrogenase [NAD(P)+] from Lactococcus lactis subsp. lactis (strain IL1403) (Streptococcus lactis).